The primary structure comprises 282 residues: Bis(5'-nucleosyl)-tetraphosphatase, symmetrical (282 aa).

Belongs to the Ap4A hydrolase family.

It catalyses the reaction P(1),P(4)-bis(5'-adenosyl) tetraphosphate + H2O = 2 ADP + 2 H(+). Its function is as follows. Hydrolyzes diadenosine 5',5'''-P1,P4-tetraphosphate to yield ADP. The sequence is that of Bis(5'-nucleosyl)-tetraphosphatase, symmetrical from Klebsiella pneumoniae (strain 342).